A 408-amino-acid chain; its full sequence is MRMTLVHLSLSLFSCLLLVLSPTFIASTPVSEPELVVQEVNEKINASRRNLGVLSCGTGNPIDDCWRCDPKWEKNRQRLADCAIGFGKHAIGGRDGKIYVVTDSSDKDVVNPKPGTLRHAVIQDEPLWIIFARDMVIKLKEELIMNSFKTIDGRGASVHIAGGACITVQYVTNIIIHGVNIHDCKRKGNAYVRDSPSHYGWRTASDGDAVSIFGGSHVWVDHCSLSNCADGLIDAIHGSTAITISNNYLSHHNKVMLLGHSDSYTRDKNMQVTIAFNHFGEGLVQRMPRCRHGYFHVVNNDYTHWQMYAIGGSAAPTINSQGNRFLAPNDHVFKEVTKYEDAPRSKWKKWNWRSEGDLFLNGAFFTPSGGGASSSYAKASSLSARPSSLVASVTSNAGALFCRKGSRC.

A signal peptide spans 1 to 27 (MRMTLVHLSLSLFSCLLLVLSPTFIAS). An N-linked (GlcNAc...) asparagine glycan is attached at Asn45. Residues Asp206, Asp230, and Asp234 each coordinate Ca(2+). Arg286 is an active-site residue.

It belongs to the polysaccharide lyase 1 family. Ca(2+) is required as a cofactor.

The catalysed reaction is Eliminative cleavage of (1-&gt;4)-alpha-D-galacturonan to give oligosaccharides with 4-deoxy-alpha-D-galact-4-enuronosyl groups at their non-reducing ends.. Its pathway is glycan metabolism; pectin degradation; 2-dehydro-3-deoxy-D-gluconate from pectin: step 2/5. This Arabidopsis thaliana (Mouse-ear cress) protein is Probable pectate lyase 5.